The primary structure comprises 315 residues: Prephenate dehydratase (315 aa).

Residues 3–190 enclose the Prephenate dehydratase domain; the sequence is RIAYLGPQGT…ARTRFVLVGR (188 aa). Positions 204-281 constitute an ACT domain; sequence SVALRLPNTP…EDVRYLGSWP (78 aa).

Homodimer.

It carries out the reaction prephenate + H(+) = 3-phenylpyruvate + CO2 + H2O. Its pathway is amino-acid biosynthesis; L-phenylalanine biosynthesis; phenylpyruvate from prephenate: step 1/1. The polypeptide is Prephenate dehydratase (pheA) (Mycobacterium sp. (strain KMS)).